Consider the following 182-residue polypeptide: UPF0690 protein C1orf52 (182 aa).

2 disordered regions span residues 1–67 and 100–182; these read MAAE…RSVT and WKSN…KKKK. Acidic residues predominate over residues 23–32; that stretch reads SDEEDNIEPE. Residues 50–63 are compositionally biased toward basic and acidic residues; the sequence is NKAEKRLPGPDELF. Threonine 67 is subject to Phosphothreonine. The residue at position 132 (tyrosine 132) is a Phosphotyrosine. Over residues 151–162 the composition is skewed to acidic residues; it reads EGEETLESDDEK. Serine 158 carries the post-translational modification Phosphoserine. Over residues 172–182 the composition is skewed to basic and acidic residues; sequence VEPGEPAKKKK.

The protein belongs to the UPF0690 family. Expressed in all tissues tested including heart, placenta, liver, skeletal muscle, kidney and pancreas. Weak expression in brain and lung.

The protein is UPF0690 protein C1orf52 (C1orf52) of Homo sapiens (Human).